The primary structure comprises 1050 residues: Sentrin-specific protease 7 (1050 aa).

3 disordered regions span residues 1–28, 183–288, and 304–365; these read MDKR…SSDL, PPVT…DVKY, and RRLR…KSDF. A phosphoserine mark is found at Ser-11, Ser-12, Ser-13, and Ser-25. The segment covering 196–211 has biased composition (low complexity); the sequence is LQSEQLSSSSDGSLES. A compositionally biased stretch (polar residues) spans 259 to 271; the sequence is ISDTQPEDLNSGS. The segment covering 273–288 has biased composition (basic and acidic residues); that stretch reads GCDHLEQESRNKDVKY. Positions 310–320 are enriched in polar residues; that stretch reads LPDSQYCTSLD. Basic and acidic residues-rich tracts occupy residues 321–331 and 338–365; these read KSTEQTKKQED and EFEK…KSDF. Residues Ser-373, Ser-433, Ser-443, and Ser-444 each carry the phosphoserine modification. Residues 443 to 476 form a disordered region; the sequence is SSDEEGPVEHKSSEILKLQSKQDRETTNENESTS. Basic and acidic residues predominate over residues 449 to 469; the sequence is PVEHKSSEILKLQSKQDRETT. The protease stretch occupies residues 760 to 1050; the sequence is LGVTNEDLEC…HLQQQKGSSS (291 aa). Catalysis depends on residues His-860 and Asp-939. The active-site Nucleophile is Cys-992.

The protein belongs to the peptidase C48 family.

Its subcellular location is the cytoplasm. Its function is as follows. Protease that acts as a positive regulator of the cGAS-STING pathway by catalyzing desumoylation of CGAS. Desumoylation of CGAS promotes DNA-binding activity of CGAS, subsequent oligomerization and activation. Deconjugates SUMO2 and SUMO3 from targeted proteins, but not SUMO1. Catalyzes the deconjugation of poly-SUMO2 and poly-SUMO3 chains. Has very low efficiency in processing full-length SUMO proteins to their mature forms. The protein is Sentrin-specific protease 7 of Homo sapiens (Human).